Here is a 394-residue protein sequence, read N- to C-terminus: MVFQLPTTTAAPTGGATSSFSFGLSTGTPAAAPASGAATTAPATKTTFSFGTPAPTAGIGGGDADNSKAQAPPAFGFGLGSGTASAPLTLGTQAAANPASTTSATATGTSAAPPAFGGFTAQPAASVVPTIATSAPNTAATTTGLLGGSGLGAPKTTAAASTTLTAAPSAIASTQGAAPAPTLSTGGAFANLTTETKTTDSSAVSTASQLSYHQLEEHINKWTLEFEEQEKVFTEQATQINAWDKLLISNNGKIVELNDAVKKVKTDQQVLDQELEFIATQQKELEDSLGPLEKEFVNLPRVDMERSQTYLMVENLDTQLKQMSEDLKEIIDNLNEANKGQDTTDPIIQIGKILNAHMNSLQWIESQSTNISKKLEDIGKIQDSQKRDIFRAPF.

5 tandem repeats follow at residues 22–23, 50–51, 75–76, 77–78, and 116–117. The interval 22–117 is 5 X 2 AA repeats of F-G; that stretch reads FGLSTGTPAA…GTSAAPPAFG (96 aa). A compositionally biased stretch (low complexity) spans 45-57; it reads KTTFSFGTPAPTA. Residues 45–73 are disordered; it reads KTTFSFGTPAPTAGIGGGDADNSKAQAPP. Residues 211-341 adopt a coiled-coil conformation; that stretch reads SYHQLEEHIN…DNLNEANKGQ (131 aa).

This sequence belongs to the nucleoporin NSP1/NUP62 family. Expressed in adult male accessory glands (at protein level).

It localises to the nucleus. The protein resides in the chromosome. Its subcellular location is the nucleus envelope. It is found in the nuclear pore complex. The protein localises to the cytoplasm. It localises to the cytoskeleton. The protein resides in the spindle pole. Its subcellular location is the microtubule organizing center. It is found in the centrosome. Essential component of the nuclear pore complex. The N-terminal is probably involved in nucleocytoplasmic transport. The C-terminal is involved in protein-protein interaction probably via coiled-coil formation, promotes its association with centrosomes and may function in anchorage of Nup62 to the pore complex. Binds to transcriptionally active genes. Negatively regulates chromatin attachment to the nuclear envelope, probably by preventing chromatin tethering by Nup154. The protein is Nuclear pore glycoprotein p62 of Drosophila melanogaster (Fruit fly).